A 477-amino-acid polypeptide reads, in one-letter code: Exodeoxyribonuclease 7 large subunit (477 aa).

Residues 452–477 (KAAAAPKRVKKSPPPGTSGAQEDLFG) are disordered.

Belongs to the XseA family. As to quaternary structure, heterooligomer composed of large and small subunits.

Its subcellular location is the cytoplasm. It catalyses the reaction Exonucleolytic cleavage in either 5'- to 3'- or 3'- to 5'-direction to yield nucleoside 5'-phosphates.. Functionally, bidirectionally degrades single-stranded DNA into large acid-insoluble oligonucleotides, which are then degraded further into small acid-soluble oligonucleotides. The polypeptide is Exodeoxyribonuclease 7 large subunit (Erythrobacter litoralis (strain HTCC2594)).